The chain runs to 354 residues: Ornithine carbamoyltransferase, catabolic (354 aa).

Residues 67 to 70 (STRT), Gln-94, Arg-118, and 145 to 148 (HPTQ) contribute to the carbamoyl phosphate site. Residues Asn-177, Asp-241, and 245–246 (SM) contribute to the L-ornithine site. Carbamoyl phosphate contacts are provided by residues 284–285 (CL) and Arg-329.

This sequence belongs to the aspartate/ornithine carbamoyltransferase superfamily. OTCase family.

It is found in the cytoplasm. It catalyses the reaction carbamoyl phosphate + L-ornithine = L-citrulline + phosphate + H(+). It functions in the pathway amino-acid degradation; L-arginine degradation via ADI pathway; carbamoyl phosphate from L-arginine: step 2/2. Reversibly catalyzes the transfer of the carbamoyl group from carbamoyl phosphate (CP) to the N(epsilon) atom of ornithine (ORN) to produce L-citrulline. In Lactococcus lactis subsp. cremoris (Streptococcus cremoris), this protein is Ornithine carbamoyltransferase, catabolic (arcB).